Here is a 146-residue protein sequence, read N- to C-terminus: Endoribonuclease YbeY (146 aa).

Zn(2+) is bound by residues His108, His112, and His118.

This sequence belongs to the endoribonuclease YbeY family. Zn(2+) is required as a cofactor.

Its subcellular location is the cytoplasm. Single strand-specific metallo-endoribonuclease involved in late-stage 70S ribosome quality control and in maturation of the 3' terminus of the 16S rRNA. This is Endoribonuclease YbeY from Aster yellows witches'-broom phytoplasma (strain AYWB).